The following is an 89-amino-acid chain: LSM complex subunit LSM3 (89 aa).

The 80-residue stretch at 3 to 82 (TPLDLLKLNL…VTLISTPSED (80 aa)) folds into the Sm domain.

This sequence belongs to the snRNP Sm proteins family. As to quaternary structure, component of the heptameric LSM1-LSM7 complex that forms a seven-membered ring structure with a donut shape. The LSm subunits are arranged in the order LSM1, LSM2, LSM3, LSM6, LSM5, LSM7 and LSM4. Except for LSM1, where a C-terminal helix crosses the ring structure to form additional interactions with LSM3 and LSM6, each subunit interacts only with its two neighboring subunits. The LSM1-LSM7 complex interacts with PAT1; within the complex PAT1 has direct interactions with LSM2 and LSM3. The LSM1-LSM7 complex interacts with XRN1. Component of the heptameric LSM2-LSM8 complex that forms a seven-membered ring structure with a donut shape; an RNA strand can pass through the hole in the center of the ring structure. The LSm subunits are arranged in the order LSM8, LSM2, LSM3, LSM6, LSM5, LSM7 and LSM4. Component of the spliceosome U4/U6-U5 tri-snRNP complex composed of the U4, U6 and U5 snRNAs and at least PRP3, PRP4, PRP6, PRP8, PRP18, PRP31, PRP38, SNU13, SNU23, SNU66, SNU114, SPP381, SMB1, SMD1, SMD2, SMD3, SMX2, SMX3, LSM2, LSM3, LSM4, LSM5, LSM6, LSM7, LSM8, BRR2 and DIB1. May be found in a complex comprising LSM2-LSM7 without LSM1 or LSM8; the complex associates with pre-P RNA and snoRNA SNR5.

The protein resides in the nucleus. It localises to the nucleolus. Its subcellular location is the cytoplasm. In terms of biological role, component of LSm protein complexes, which are involved in RNA processing and may function in a chaperone-like manner. Component of the cytoplasmic LSM1-LSM7 complex which is involved in mRNA degradation by activating the decapping step. Together with PAT1, the LSM1-LSM7 complex binds to osmotic stress-activated mRNAs to attenuate the osmotic stress response, probably by limiting ribosome access to the mRNA and consequently translation. Component of the nuclear LSM2-LSM8 complex, which is involved in spliceosome assembly. The LSM2-LSM8 complex plays a role in the biogenesis of the spliceosomal U4/U6-U5 tri-snRNP complex by accelerating PRP24-mediated annealing of U4/U6 di-snRNA. The LSM2-LSM8 complex binds U6 snRNA terminating with a non-cyclic 3' phosphate group. LSM2-LSM8 is probably also involved in degradation of nuclear pre-mRNA by targeting them for decapping. LSM2-LSM8 could be involved in processing of pre-tRNAs, pre-rRNAs and U3 snoRNA, although involvement may be indirect. In a complex that probably contains LSM2-LSM7, but not LSM1 or LSM8, associates with the precursor of the RNA component of RNase P (pre-P RNA) and may be involved in maturing pre-P RNA; the complex also associates with snoRNA SNR5. This is LSM complex subunit LSM3 (LSM3) from Saccharomyces cerevisiae (strain ATCC 204508 / S288c) (Baker's yeast).